The following is a 593-amino-acid chain: A-type ATP synthase subunit A (593 aa).

236-243 (GPFGSGKT) is an ATP binding site.

Belongs to the ATPase alpha/beta chains family. As to quaternary structure, has multiple subunits with at least A(3), B(3), C, D, E, F, H, I and proteolipid K(x).

Its subcellular location is the cell membrane. It catalyses the reaction ATP + H2O + 4 H(+)(in) = ADP + phosphate + 5 H(+)(out). Its function is as follows. Component of the A-type ATP synthase that produces ATP from ADP in the presence of a proton gradient across the membrane. The A chain is the catalytic subunit. The polypeptide is A-type ATP synthase subunit A (Pyrobaculum islandicum (strain DSM 4184 / JCM 9189 / GEO3)).